The following is a 374-amino-acid chain: Glutamate 5-kinase (374 aa).

Lys9 is a binding site for ATP. Substrate is bound by residues Ser49, Asp136, and Asn148. ATP contacts are provided by residues 168–169 and 210–216; these read TD and TGGMRSK. In terms of domain architecture, PUA spans 276–354; sequence SGTITVDSGA…EEARQYSYLH (79 aa).

It belongs to the glutamate 5-kinase family.

It is found in the cytoplasm. It catalyses the reaction L-glutamate + ATP = L-glutamyl 5-phosphate + ADP. Its pathway is amino-acid biosynthesis; L-proline biosynthesis; L-glutamate 5-semialdehyde from L-glutamate: step 1/2. In terms of biological role, catalyzes the transfer of a phosphate group to glutamate to form L-glutamate 5-phosphate. This is Glutamate 5-kinase from Geobacillus thermodenitrificans (strain NG80-2).